Here is a 369-residue protein sequence, read N- to C-terminus: Dihydroorotate dehydrogenase (quinone) (369 aa).

Residues 66–70 and threonine 90 contribute to the FMN site; that span reads AGFDK. Lysine 70 is a substrate binding site. 115 to 119 contacts substrate; the sequence is NRMGF. FMN contacts are provided by asparagine 143 and asparagine 176. Residue asparagine 176 coordinates substrate. The active-site Nucleophile is serine 179. Asparagine 181 lines the substrate pocket. FMN-binding residues include lysine 217 and threonine 245. 246–247 serves as a coordination point for substrate; the sequence is NT. FMN-binding positions include glycine 271, glycine 300, and 321 to 322; that span reads YT.

This sequence belongs to the dihydroorotate dehydrogenase family. Type 2 subfamily. As to quaternary structure, monomer. Requires FMN as cofactor.

The protein localises to the cell membrane. The catalysed reaction is (S)-dihydroorotate + a quinone = orotate + a quinol. It participates in pyrimidine metabolism; UMP biosynthesis via de novo pathway; orotate from (S)-dihydroorotate (quinone route): step 1/1. Its function is as follows. Catalyzes the conversion of dihydroorotate to orotate with quinone as electron acceptor. In Nocardia farcinica (strain IFM 10152), this protein is Dihydroorotate dehydrogenase (quinone).